Consider the following 115-residue polypeptide: NADH-ubiquinone oxidoreductase chain 3 (115 aa).

A run of 3 helical transmembrane segments spans residues 3–23 (LFVA…VAFW), 55–75 (FFLV…LLPL), and 84–104 (LSAM…GLIY).

The protein belongs to the complex I subunit 3 family. Core subunit of respiratory chain NADH dehydrogenase (Complex I) which is composed of 45 different subunits. Interacts with TMEM186. Interacts with TMEM242.

Its subcellular location is the mitochondrion inner membrane. The catalysed reaction is a ubiquinone + NADH + 5 H(+)(in) = a ubiquinol + NAD(+) + 4 H(+)(out). In terms of biological role, core subunit of the mitochondrial membrane respiratory chain NADH dehydrogenase (Complex I) which catalyzes electron transfer from NADH through the respiratory chain, using ubiquinone as an electron acceptor. Essential for the catalytic activity of complex I. This is NADH-ubiquinone oxidoreductase chain 3 from Sigmodon hispidus (Hispid cotton rat).